The following is an 87-amino-acid chain: Small ribosomal subunit protein bS20 (87 aa).

Residues 67–87 (HKNNGSRKASRLDAYVQSKQQ) form a disordered region.

It belongs to the bacterial ribosomal protein bS20 family.

Its function is as follows. Binds directly to 16S ribosomal RNA. The chain is Small ribosomal subunit protein bS20 from Metamycoplasma arthritidis (strain 158L3-1) (Mycoplasma arthritidis).